A 252-amino-acid polypeptide reads, in one-letter code: Thiazole synthase (252 aa).

Lysine 91 (schiff-base intermediate with DXP) is an active-site residue. 1-deoxy-D-xylulose 5-phosphate is bound by residues glycine 152, 179–180, and 201–202; these read AG and NT.

It belongs to the ThiG family. Homotetramer. Forms heterodimers with either ThiH or ThiS.

The protein localises to the cytoplasm. The enzyme catalyses [ThiS sulfur-carrier protein]-C-terminal-Gly-aminoethanethioate + 2-iminoacetate + 1-deoxy-D-xylulose 5-phosphate = [ThiS sulfur-carrier protein]-C-terminal Gly-Gly + 2-[(2R,5Z)-2-carboxy-4-methylthiazol-5(2H)-ylidene]ethyl phosphate + 2 H2O + H(+). It functions in the pathway cofactor biosynthesis; thiamine diphosphate biosynthesis. Catalyzes the rearrangement of 1-deoxy-D-xylulose 5-phosphate (DXP) to produce the thiazole phosphate moiety of thiamine. Sulfur is provided by the thiocarboxylate moiety of the carrier protein ThiS. In vitro, sulfur can be provided by H(2)S. This Gluconobacter oxydans (strain 621H) (Gluconobacter suboxydans) protein is Thiazole synthase.